Consider the following 989-residue polypeptide: DNA-directed RNA polymerase subunit beta' (989 aa).

Mg(2+)-binding residues include aspartate 383, aspartate 385, and aspartate 387.

It belongs to the RNA polymerase beta' chain family. In terms of assembly, the RNAP catalytic core consists of 2 alpha, 1 beta, 1 beta' and 1 omega subunit. When a sigma factor is associated with the core the holoenzyme is formed, which can initiate transcription. Mg(2+) serves as cofactor.

It carries out the reaction RNA(n) + a ribonucleoside 5'-triphosphate = RNA(n+1) + diphosphate. DNA-dependent RNA polymerase catalyzes the transcription of DNA into RNA using the four ribonucleoside triphosphates as substrates. The sequence is that of DNA-directed RNA polymerase subunit beta' (rpoC) from Leuconostoc pseudomesenteroides.